Here is a 34-residue protein sequence, read N- to C-terminus: N(4)-(Beta-N-acetylglucosaminyl)-L-asparaginase (34 aa).

T18 acts as the Nucleophile in catalysis.

Belongs to the Ntn-hydrolase family. In terms of assembly, heterotetramer of two alpha and two beta chains arranged as a dimer of alpha/beta heterodimers. Cleaved into an alpha and beta chain by autocatalysis; this activates the enzyme. The N-terminal residue of the beta subunit is responsible for the nucleophile hydrolase activity. In terms of processing, N-glycosylated.

It localises to the lysosome. It catalyses the reaction N(4)-(beta-N-acetyl-D-glucosaminyl)-L-asparagine + H2O = N-acetyl-beta-D-glucosaminylamine + L-aspartate + H(+). In terms of biological role, cleaves the GlcNAc-Asn bond which joins oligosaccharides to the peptide of asparagine-linked glycoproteins. The sequence is that of N(4)-(Beta-N-acetylglucosaminyl)-L-asparaginase (AGA) from Sus scrofa (Pig).